The chain runs to 824 residues: MLLAGGSPQPSFLLGSLKADCVTKPFLQRCQDLVRVIEDFPAKELHAIFPWLIETVFGSLDGSILGWNLRGLHERINPLEFHTALEFLDPSGAMMKLVYKLQAEEYKYDFPVSFLPGPVRASIQERVLPECPLYHNKIQFPASGGVSFNLALNSFEYFMFHFAFCLLKQRNYPQGLHFSTADSAYYILVDKYLKWFLPVEGNVPPPHSPNTGGTVPSPAPRSPSLSFTSYGSHTSLLKRHISHQHLVNADPAAQEIWRTETLLQVFVEIWLHHYSLEMYQKMQSPNAKLEALHNRLSVSSAPPIYPALPGSLHSYQELFQPTEEHVLVVRLLVKHLHTFSNSIRPEQVSPSTHSHTASPLEELKRVVVPRFIQQKLYIFLQHCFGHWPLDASFRAVLEMWLSYVQPWRYVLERSSPVSGEMQNRNVPEKWSTFVQENLLFYTKLFLRFLSRALRTDLVNPKNALMVFRAAKVFSQLNLPEMILNGEQLFLKPEHVIPHRQHRLLLTPNLGGSFLSSWQPPITDTSLKVKSHVFSLEGQDCQYMQMFGPEARNLVLRLAQMISQAKQTAKSISNHSPDSSANQSFLSWFGLGSPDFNGSYNGSDLDEAGYDTIRKTDEHLEKALDYFCQIFRLNPTQLGQLTANVDSSQDDDGKNKLPDCIQSEDGVVLTSLGRYQIINGLRKFDIEYQGDPELQPIRSYENAMLVRYLYRLSSVINKRFANSMGALCARKDFLGKLCRHHLTSSSRKCKKSPITSVSPSEPAAPHIRLRFLASYRTLAFLFIFYILGSLLSLGPLICTFLLLIGCMFYAIVQTLLSEEQKPHNN.

Residues 777 to 797 traverse the membrane as a helical segment; it reads LAFLFIFYILGSLLSLGPLIC.

The cofactor is Mg(2+).

It is found in the endoplasmic reticulum membrane. Its subcellular location is the golgi apparatus membrane. It localises to the nucleus envelope. The protein resides in the cell membrane. The protein localises to the sarcolemma. The catalysed reaction is a sphingomyelin + H2O = phosphocholine + an N-acylsphing-4-enine + H(+). Its function is as follows. Catalyzes the hydrolysis of membrane sphingomyelin to form phosphorylcholine and ceramide. It has a relevant role in the homeostasis of membrane sphingolipids, thereby influencing membrane integrity, and endoplasmic reticulum organization and function. May sensitize cells to DNA damage-induced apoptosis. The sequence is that of Sphingomyelin phosphodiesterase 4 (smpd4) from Xenopus laevis (African clawed frog).